Consider the following 310-residue polypeptide: Zinc finger protein 42 homolog (310 aa).

Residues 1 to 15 (MSQQLKKRAKTRHQK) are compositionally biased toward basic residues. The interval 1–35 (MSQQLKKRAKTRHQKGLGGRAPSGAKPRQGKSSQD) is disordered. C2H2-type zinc fingers lie at residues 188 to 212 (IACP…LLIH), 217 to 239 (HVCA…FLVH), 245 to 269 (FRCT…VRIH), and 275 to 299 (FVCP…ILTH). Residues Lys231 and Lys233 each participate in a glycyl lysine isopeptide (Lys-Gly) (interchain with G-Cter in ubiquitin) cross-link.

Belongs to the krueppel C2H2-type zinc-finger protein family. Polyubiquitinated by RNF12, leading to proteasomal degradation. As to expression, expressed in kidney, epidermal keratinocytes, prostate epithelial cells, bronchial and small airway lung epithelial cells (at protein level). Expressed in malignant kidney and several carcinoma cell lines (at protein level). Expressed in embryonic stem cells, kidney, epidermal keratinocytes, prostate epithelial cells, bronchial and small airway lung epithelial cells. Expressed in embryonal carcinomas, seminomas, malignant kidney and several carcinoma cell lines.

The protein resides in the nucleus. Involved in the reprogramming of X-chromosome inactivation during the acquisition of pluripotency. Required for efficient elongation of TSIX, a non-coding RNA antisense to XIST. Binds DXPas34 enhancer within the TSIX promoter. Involved in ES cell self-renewal. This chain is Zinc finger protein 42 homolog (ZFP42), found in Homo sapiens (Human).